We begin with the raw amino-acid sequence, 80 residues long: Large ribosomal subunit protein uL30 (80 aa).

It belongs to the universal ribosomal protein uL30 family. As to quaternary structure, part of the 50S ribosomal subunit.

The sequence is that of Large ribosomal subunit protein uL30 from Vesicomyosocius okutanii subsp. Calyptogena okutanii (strain HA).